Reading from the N-terminus, the 172-residue chain is uncharacterized protein (172 aa).

3 helical membrane passes run 16–36 (IMIV…AYLI), 68–88 (SFLI…AGEL), and 89–109 (VISH…YIII).

Its subcellular location is the cell membrane. This is an uncharacterized protein from Methanocaldococcus jannaschii (strain ATCC 43067 / DSM 2661 / JAL-1 / JCM 10045 / NBRC 100440) (Methanococcus jannaschii).